A 441-amino-acid chain; its full sequence is Peroxisome proliferator-activated receptor delta (441 aa).

Residues 1 to 22 (MEQPQEEAPEVREEEEKEEVAE) are compositionally biased toward acidic residues. Positions 1-54 (MEQPQEEAPEVREEEEKEEVAEAEGAPELNGGPQHALPSSSYTDLSRSSSPPSL) are disordered. A compositionally biased stretch (low complexity) spans 37–54 (LPSSSYTDLSRSSSPPSL). The nuclear receptor DNA-binding region spans 71-145 (NMECRVCGDK…LGMSHNAIRF (75 aa)). 2 NR C4-type zinc fingers span residues 74 to 94 (CRVC…CEGC) and 111 to 133 (CERS…FQKC). The region spanning 211–439 (FVIHDIETLW…HPLLQEIYKD (229 aa)) is the NR LBD domain.

The protein belongs to the nuclear hormone receptor family. NR1 subfamily. As to quaternary structure, heterodimer with the retinoid X receptor. Interacts (via domain NR LBD) with CRY1 and CRY2 in a ligand-dependent manner. In terms of processing, 'Lys-48'-linked polyubiquitinated; leading to proteasomal degradation. Deubiquitinated and stabilized by OTUD3. Ubiquitous with maximal levels in placenta and skeletal muscle.

It localises to the nucleus. Functionally, ligand-activated transcription factor key mediator of energy metabolism in adipose tissues. Receptor that binds peroxisome proliferators such as hypolipidemic drugs and fatty acids. Has a preference for poly-unsaturated fatty acids, such as gamma-linoleic acid and eicosapentanoic acid. Once activated by a ligand, the receptor binds to promoter elements of target genes. Regulates the peroxisomal beta-oxidation pathway of fatty acids. Functions as transcription activator for the acyl-CoA oxidase gene. Decreases expression of NPC1L1 once activated by a ligand. In Homo sapiens (Human), this protein is Peroxisome proliferator-activated receptor delta.